The chain runs to 344 residues: MLTLGLESSCDETACALVDAKGHIMANVVFSQQDHVAYGGIVPELASRAHLRVFPSVVDSALKESGVSLEDIDLIAVTHTPGLIGSLAIGVNFAKGLAIGCQKPIIGVNHVEAHLYAAYMEAENVEFPALGLAVSGAHTAMFLMEDPLTYKLIGKSRDDAIGETFDKVARFLGLPYPGGSLIEKLASCGCEESYSFSPSKVPGCDLSFSGLKTAVLYAIKGNNSNSRTPLPELSEAEKSDIAASFQRAAFTSIAQKLPNIVKKISCRSILVGGGVASNKYFQNLLKNTLNLPLYFPSSKLCTDNAAMIAGLGRELFLSDKSTIGIHPCARYHWESISASLSPLP.

2 residues coordinate Fe cation: His110 and His114. Substrate is bound by residues 133–137 (AVSGA), Asp166, Gly179, and Asn278. Residue Asp303 participates in Fe cation binding.

Belongs to the KAE1 / TsaD family. Fe(2+) serves as cofactor.

It is found in the cytoplasm. It carries out the reaction L-threonylcarbamoyladenylate + adenosine(37) in tRNA = N(6)-L-threonylcarbamoyladenosine(37) in tRNA + AMP + H(+). Functionally, required for the formation of a threonylcarbamoyl group on adenosine at position 37 (t(6)A37) in tRNAs that read codons beginning with adenine. Is involved in the transfer of the threonylcarbamoyl moiety of threonylcarbamoyl-AMP (TC-AMP) to the N6 group of A37, together with TsaE and TsaB. TsaD likely plays a direct catalytic role in this reaction. This Chlamydia caviae (strain ATCC VR-813 / DSM 19441 / 03DC25 / GPIC) (Chlamydophila caviae) protein is tRNA N6-adenosine threonylcarbamoyltransferase.